A 79-amino-acid polypeptide reads, in one-letter code: Translational regulator CsrA (79 aa).

The protein belongs to the CsrA/RsmA family. As to quaternary structure, homodimer; the beta-strands of each monomer intercalate to form a hydrophobic core, while the alpha-helices form wings that extend away from the core.

The protein localises to the cytoplasm. In terms of biological role, a translational regulator that binds mRNA to regulate translation initiation and/or mRNA stability. Usually binds in the 5'-UTR at or near the Shine-Dalgarno sequence preventing ribosome-binding, thus repressing translation. Its main target seems to be the major flagellin gene, while its function is anatagonized by FliW. The polypeptide is Translational regulator CsrA (Maridesulfovibrio salexigens (strain ATCC 14822 / DSM 2638 / NCIMB 8403 / VKM B-1763) (Desulfovibrio salexigens)).